The following is a 451-amino-acid chain: MSFKPVVALVGRPNVGKSTLFNRLTRSRAALVADFSGLTRDRHYGEGRVGDTPFLVIDTGGFEPVAKDGILAEMARQTRQAIAEADVVVFLVDARAGVNAHDHEIARLLRKSGQQRVLLAVNKAEGMGVGNATGDFHELGLGEPHPISAAHGDGIVDLIEIALSGLVAPPADTGEQLEQDVVDHRIKLAIVGRPNVGKSTLINTLLGEERVIAFDMPGTTRDAIEIDFERDGRKYTLIDTAGLRKRGKVFEAIEKFSVIKTLQAIEASNVVLLMIDAQAEVSEQDAHIAGFVLETGRAVVVAINKWDGLDSDQRERIEREFQRKLRFLGFARMHTISALKGQGVKPLLKSVNAAHAAAFAKLSTPRLTRELQAAVEQQPPPRKGIFRPKMRYAHQGGQNPPLIVIHGNALDAVPDSYRRYLETRFRNAFDLAGTPLRIEFKSSRNPYVQEN.

EngA-type G domains follow at residues 5–170 (PVVA…VAPP) and 186–359 (IKLA…AAAF). Residues 11–18 (GRPNVGKS), 58–62 (DTGGF), 122–125 (NKAE), 192–199 (GRPNVGKS), 239–243 (DTAGL), and 304–307 (NKWD) each bind GTP. Residues 360–444 (AKLSTPRLTR…PLRIEFKSSR (85 aa)) enclose the KH-like domain.

Belongs to the TRAFAC class TrmE-Era-EngA-EngB-Septin-like GTPase superfamily. EngA (Der) GTPase family. Associates with the 50S ribosomal subunit.

GTPase that plays an essential role in the late steps of ribosome biogenesis. This is GTPase Der from Bordetella bronchiseptica (strain ATCC BAA-588 / NCTC 13252 / RB50) (Alcaligenes bronchisepticus).